Consider the following 126-residue polypeptide: Large ribosomal subunit protein uL22c (126 aa).

It belongs to the universal ribosomal protein uL22 family. In terms of assembly, part of the 50S ribosomal subunit.

Its subcellular location is the plastid. It is found in the chloroplast. Functionally, this protein binds specifically to 23S rRNA. The globular domain of the protein is located near the polypeptide exit tunnel on the outside of the subunit, while an extended beta-hairpin is found that lines the wall of the exit tunnel in the center of the 70S ribosome. The protein is Large ribosomal subunit protein uL22c (rpl22) of Cryptomeria japonica (Japanese cedar).